The chain runs to 766 residues: Leucine-rich repeat and fibronectin type III domain-containing protein 1 (766 aa).

The first 31 residues, 1 to 31 (MAPGPFSSGLFSPPPAALPFLLLLWAGASRG), serve as a signal peptide directing secretion. The LRRNT domain occupies 32-65 (QPCPGRCICQNVAPTLTMLCAKTGLLFVPPAIDR). At 32–536 (QPCPGRCICQ…LRAHFLGGTM (505 aa)) the chain is on the extracellular side. 7 LRR repeats span residues 66–87 (RVVELRLTDNFIAAVRRRDFAN), 90–111 (SLVHLTLSRNTIGQVAAGAFAD), 114–135 (ALRALHLDSNRLAEVRGDQLRG), 138–159 (NLRHLILGNNQIRKVESAAFDA), 163–184 (TVEDLDLSYNNLEALPWEAVGQ), 187–208 (NLNTLTLDHNLIDHIAEGTFVQ), and 211–232 (KLVRLDMTSNRLHKLPPDGLFL). Asn87 carries an N-linked (GlcNAc...) asparagine glycan. The LRRCT domain maps to 252-298 (NPLHCNCELLWLRRLTREDDLETCATPEHLTDRYFWSIPEEEFLCEP). An Ig-like domain is found at 299–386 (PLITRQAGGR…GEATAPVEVC (88 aa)). Cys321 and Cys370 form a disulfide bridge. The N-linked (GlcNAc...) asparagine glycan is linked to Asn343. A disordered region spans residues 397 to 424 (PAAPPPLTEPGSSDIATPGRPGANDSTS). A Fibronectin type-III domain is found at 424-520 (SERRLVAAEL…GCVQFTTAGD (97 aa)). The helical transmembrane segment at 537–557 (IIAIGGVIVASVLVFIVLLMI) threads the bilayer. Topologically, residues 558–766 (RYKVYGDGDS…STEWMLESTV (209 aa)) are cytoplasmic. Disordered regions lie at residues 568–601 (RRIKGTSRTPPRVSHVCSQTNGAGAQQASAPPAP) and 645–742 (LCLL…GEDG). Ser713 carries the post-translational modification Phosphoserine. Residues 714 to 727 (YPRRARRTKRHRST) show a composition bias toward basic residues. A PDZ-binding motif is present at residues 763 to 766 (ESTV).

The protein belongs to the LRFN family. Can form heteromeric complexes with LRFN2, LRFN3, LRFN4 and LRFN5. Forms homomeric complexes, but not across cell junctions. Interacts with DLG4. Also interacts with DLG1, DLG2, and DLG3. Interacts with 2 AMPA receptor subunits GRIA1 and GRIA2 and NMDA receptor subunit GRIN1. Glycosylated. Predominantly expressed in the brain, with a weak, but broad expression in the cerebral cortex and diencephalic nuclei. Also detected in other parts of the central nervous system, including the olfactory bulb, pons, cerebellum, and medulla oblongata, as well as in the peripheral nervous system, such as the ganglia of cranial nerves and the dorsal root ganglion during gestation.

It is found in the membrane. It localises to the synapse. Its subcellular location is the postsynaptic density membrane. Its function is as follows. Promotes neurite outgrowth in hippocampal neurons. Involved in the regulation and maintenance of excitatory synapses. Induces the clustering of excitatory postsynaptic proteins, including DLG4, DLGAP1, GRIA1 and GRIN1. This chain is Leucine-rich repeat and fibronectin type III domain-containing protein 1 (Lrfn1), found in Mus musculus (Mouse).